Consider the following 305-residue polypeptide: Orotidine 5'-phosphate decarboxylase (305 aa).

The Proton donor role is filled by K108.

It belongs to the OMP decarboxylase family. Type 2 subfamily.

The catalysed reaction is orotidine 5'-phosphate + H(+) = UMP + CO2. It functions in the pathway pyrimidine metabolism; UMP biosynthesis via de novo pathway; UMP from orotate: step 2/2. The sequence is that of Orotidine 5'-phosphate decarboxylase from Caldicellulosiruptor saccharolyticus (strain ATCC 43494 / DSM 8903 / Tp8T 6331).